Consider the following 348-residue polypeptide: uncharacterized protein (348 aa).

2 residues coordinate NADP(+): lysine 41 and tyrosine 170. Phosphoserine is present on serine 339.

Belongs to the NAD(P)-dependent epimerase/dehydratase family. Dihydroflavonol-4-reductase subfamily.

This is an uncharacterized protein from Saccharomyces cerevisiae (strain ATCC 204508 / S288c) (Baker's yeast).